A 249-amino-acid chain; its full sequence is Proteasome activator complex subunit 1 (249 aa).

Residues 59 to 102 are disordered; that stretch reads APLDIPVPDPVKEKEKEERKKQQEKEEKEEKKKGDEDDKGPPCG. The span at 68-98 shows a compositional bias: basic and acidic residues; sequence PVKEKEKEERKKQQEKEEKEEKKKGDEDDKG.

It belongs to the PA28 family. Heterodimer of PSME1 and PSME2, which forms a hexameric ring. PSME1 can form homoheptamers.

In terms of biological role, implicated in immunoproteasome assembly and required for efficient antigen processing. The PA28 activator complex enhances the generation of class I binding peptides by altering the cleavage pattern of the proteasome. This Mus musculus (Mouse) protein is Proteasome activator complex subunit 1 (Psme1).